The sequence spans 465 residues: MIKREFLPESAELKIKLTADSKKWAEFYQKAEQKQAAKVSLRGFRKGKVPLEKARAYLNPQAVFELALRMFLPELEKQAATNIIDSDNVIESPIFNIVNMDKNNLEIEFLYPVYPEIKLPDYKNLKTKFAIKKITKEDIELQKQKLLEAKGRFIEVNRPVKIGDVINFNFKGFIDDEPFDGGEGENFDLRIGSNSFIAGFEEQLVGLEIKKEADIYVTFPENYQVHTYANKKARFRVRINKIKENQPAKLTNEFVASLKIQNVETISQLEVYLENLTERENIERAKIDFQRNALTEIGEQVEVPLAKKLINLEIERLNEVFHSTLKQQEIPLKEYLKITKFTEKDIYDQFEVEAKKLLKNSFIFAEIAKLEGLVPTQQEYESHVEKLAKFTGKSVQEISETVSYNEIQINITNQKVIDKLIEFNHEAKDEEIVNKNQNDNEIEQDKEQKDNNEEKIKQENNLENK.

Residues 163–248 (GDVINFNFKG…INKIKENQPA (86 aa)) form the PPIase FKBP-type domain. Residues 431 to 465 (EIVNKNQNDNEIEQDKEQKDNNEEKIKQENNLENK) form a disordered region. A compositionally biased stretch (basic and acidic residues) spans 443 to 465 (EQDKEQKDNNEEKIKQENNLENK).

Belongs to the FKBP-type PPIase family. Tig subfamily.

The protein resides in the cytoplasm. It catalyses the reaction [protein]-peptidylproline (omega=180) = [protein]-peptidylproline (omega=0). Its function is as follows. Involved in protein export. Acts as a chaperone by maintaining the newly synthesized protein in an open conformation. Functions as a peptidyl-prolyl cis-trans isomerase. The sequence is that of Trigger factor from Mesomycoplasma hyopneumoniae (strain J / ATCC 25934 / NCTC 10110) (Mycoplasma hyopneumoniae).